The chain runs to 314 residues: Aspartate carbamoyltransferase catalytic subunit (314 aa).

Carbamoyl phosphate is bound by residues Arg-58 and Thr-59. Residue Lys-86 coordinates L-aspartate. Residues Arg-108, His-136, and Gln-139 each contribute to the carbamoyl phosphate site. Arg-169 and Arg-223 together coordinate L-aspartate. Residues Gly-264 and Pro-265 each coordinate carbamoyl phosphate.

Belongs to the aspartate/ornithine carbamoyltransferase superfamily. ATCase family. In terms of assembly, heterododecamer (2C3:3R2) of six catalytic PyrB chains organized as two trimers (C3), and six regulatory PyrI chains organized as three dimers (R2).

It catalyses the reaction carbamoyl phosphate + L-aspartate = N-carbamoyl-L-aspartate + phosphate + H(+). It participates in pyrimidine metabolism; UMP biosynthesis via de novo pathway; (S)-dihydroorotate from bicarbonate: step 2/3. Its function is as follows. Catalyzes the condensation of carbamoyl phosphate and aspartate to form carbamoyl aspartate and inorganic phosphate, the committed step in the de novo pyrimidine nucleotide biosynthesis pathway. This is Aspartate carbamoyltransferase catalytic subunit from Jannaschia sp. (strain CCS1).